The chain runs to 199 residues: uncharacterized protein (199 aa).

Residues 38-169 form the Nudix hydrolase domain; the sequence is NRRAAVLIPI…SLDIHREGIN (132 aa). Positions 76–98 match the Nudix box motif; the sequence is GKADPDDQSLISTALREAEEEVA. The Mg(2+) site is built by E92 and E96.

It belongs to the Nudix hydrolase family. PCD1 subfamily. Mn(2+) is required as a cofactor. The cofactor is Mg(2+).

In terms of biological role, probably mediates the hydrolysis of some nucleoside diphosphate derivatives. This is an uncharacterized protein from Yersinia pseudotuberculosis serotype I (strain IP32953).